The following is a 427-amino-acid chain: UPF0229 protein bll6755 (427 aa).

A disordered region spans residues 86–107 (DYLQRSGQGSAKDSGPGEGDSE).

The protein belongs to the UPF0229 family.

This chain is UPF0229 protein bll6755, found in Bradyrhizobium diazoefficiens (strain JCM 10833 / BCRC 13528 / IAM 13628 / NBRC 14792 / USDA 110).